Consider the following 364-residue polypeptide: 3-isopropylmalate dehydrogenase (364 aa).

79–92 (GSKWDHLPEIEKPE) contacts NAD(+). Substrate contacts are provided by Arg-100, Arg-110, Arg-139, and Asp-227. Residues Asp-227, Asp-251, and Asp-255 each coordinate Mg(2+). An NAD(+)-binding site is contributed by 285–297 (GSAPNIAGKTIAN).

The protein belongs to the isocitrate and isopropylmalate dehydrogenases family. LeuB type 1 subfamily. As to quaternary structure, homodimer. The cofactor is Mg(2+). Mn(2+) is required as a cofactor.

Its subcellular location is the cytoplasm. It catalyses the reaction (2R,3S)-3-isopropylmalate + NAD(+) = 4-methyl-2-oxopentanoate + CO2 + NADH. It participates in amino-acid biosynthesis; L-leucine biosynthesis; L-leucine from 3-methyl-2-oxobutanoate: step 3/4. Its function is as follows. Catalyzes the oxidation of 3-carboxy-2-hydroxy-4-methylpentanoate (3-isopropylmalate) to 3-carboxy-4-methyl-2-oxopentanoate. The product decarboxylates to 4-methyl-2 oxopentanoate. This Buchnera aphidicola subsp. Thelaxes suberi protein is 3-isopropylmalate dehydrogenase.